Reading from the N-terminus, the 272-residue chain is 2-dehydro-3-deoxyphosphooctonate aldolase (272 aa).

It belongs to the KdsA family.

The protein resides in the cytoplasm. It catalyses the reaction D-arabinose 5-phosphate + phosphoenolpyruvate + H2O = 3-deoxy-alpha-D-manno-2-octulosonate-8-phosphate + phosphate. The protein operates within carbohydrate biosynthesis; 3-deoxy-D-manno-octulosonate biosynthesis; 3-deoxy-D-manno-octulosonate from D-ribulose 5-phosphate: step 2/3. Its pathway is bacterial outer membrane biogenesis; lipopolysaccharide biosynthesis. This is 2-dehydro-3-deoxyphosphooctonate aldolase from Geotalea uraniireducens (strain Rf4) (Geobacter uraniireducens).